Consider the following 101-residue polypeptide: Small ribosomal subunit protein bS18c (101 aa).

Belongs to the bacterial ribosomal protein bS18 family. Part of the 30S ribosomal subunit.

Its subcellular location is the plastid. It is found in the chloroplast. The sequence is that of Small ribosomal subunit protein bS18c from Vitis vinifera (Grape).